A 536-amino-acid chain; its full sequence is REST corepressor 2 (536 aa).

The segment at 1–44 (MERSGSGVLSRSRAKTVTNGNSQHSEEESSDEEHPNDSMIRVGG) is disordered. Residues 24–36 (HSEEESSDEEHPN) show a composition bias toward basic and acidic residues. An ELM2 domain is found at 38–123 (SMIRVGGDYQ…KSLADLANFT (86 aa)). An SANT 1 domain is found at 124–175 (PFPDEWTVEDKVLFEQAFSFHGKSFHRIQQMLPDKMITSLVKYYYSWKKTRT). Positions 179–264 (VMDRQARKLL…RARRRPPKGM (86 aa)) are disordered. Positions 197-211 (NDEIEEGDPGSDSDF) are enriched in acidic residues. Positions 249–262 (YRHHPLRARRRPPK) are enriched in basic residues. A coiled-coil region spans residues 283–315 (VTIRQLDTQLVSLKRQVQKIKQTNSVLRNNLGD). The 52-residue stretch at 328–379 (KINSRWTTEEQLLAVQAVRRYGKDFAAIADVIGNKTVAQVSSFFVSYRRRFN) folds into the SANT 2 domain. The segment at 389 to 536 (AEQEVQGSSG…GLKVESPQSH (148 aa)) is disordered. Residues 391-406 (QEVQGSSGRTVNTELN) are compositionally biased toward polar residues. Over residues 422 to 449 (SPPHSDSPLPSSEGSASGNHSSAQSSPP) the composition is skewed to low complexity. Positions 450-476 (LTQPPPLLRPAPPSAPPSLLRQPPPLQ) are enriched in pro residues.

This sequence belongs to the CoREST family.

It localises to the nucleus. Its function is as follows. May act as a component of a corepressor complex that represses transcription. This Danio rerio (Zebrafish) protein is REST corepressor 2 (rcor2).